A 435-amino-acid polypeptide reads, in one-letter code: Minor fimbrial subunit HifE (435 aa).

Positions 1–31 (MKTLTTYAKYFTPISKIAFLFCFLMGNIAEA) are cleaved as a signal peptide.

This sequence belongs to the fimbrial protein family.

Its subcellular location is the fimbrium. Its function is as follows. May be a minor structural protein required for pilus biogenesis. May be the adhesive component in the pili. In Haemophilus influenzae, this protein is Minor fimbrial subunit HifE (hifE).